Reading from the N-terminus, the 305-residue chain is UDP-3-O-acyl-N-acetylglucosamine deacetylase (305 aa).

Zn(2+) contacts are provided by histidine 78, histidine 237, and aspartate 241. Histidine 264 acts as the Proton donor in catalysis.

The protein belongs to the LpxC family. Zn(2+) serves as cofactor.

It catalyses the reaction a UDP-3-O-[(3R)-3-hydroxyacyl]-N-acetyl-alpha-D-glucosamine + H2O = a UDP-3-O-[(3R)-3-hydroxyacyl]-alpha-D-glucosamine + acetate. Its pathway is glycolipid biosynthesis; lipid IV(A) biosynthesis; lipid IV(A) from (3R)-3-hydroxytetradecanoyl-[acyl-carrier-protein] and UDP-N-acetyl-alpha-D-glucosamine: step 2/6. Functionally, catalyzes the hydrolysis of UDP-3-O-myristoyl-N-acetylglucosamine to form UDP-3-O-myristoylglucosamine and acetate, the committed step in lipid A biosynthesis. This chain is UDP-3-O-acyl-N-acetylglucosamine deacetylase, found in Burkholderia ambifaria (strain MC40-6).